A 94-amino-acid chain; its full sequence is DNA-directed RNA polymerase subunit omega (94 aa).

It belongs to the RNA polymerase subunit omega family. The RNAP catalytic core consists of 2 alpha, 1 beta, 1 beta' and 1 omega subunit. When a sigma factor is associated with the core the holoenzyme is formed, which can initiate transcription.

It carries out the reaction RNA(n) + a ribonucleoside 5'-triphosphate = RNA(n+1) + diphosphate. Its function is as follows. Promotes RNA polymerase assembly. Latches the N- and C-terminal regions of the beta' subunit thereby facilitating its interaction with the beta and alpha subunits. The sequence is that of DNA-directed RNA polymerase subunit omega from Parafrankia sp. (strain EAN1pec).